The primary structure comprises 208 residues: Protein-L-isoaspartate O-methyltransferase (208 aa).

Ser-59 is an active-site residue.

This sequence belongs to the methyltransferase superfamily. L-isoaspartyl/D-aspartyl protein methyltransferase family.

The protein localises to the cytoplasm. It catalyses the reaction [protein]-L-isoaspartate + S-adenosyl-L-methionine = [protein]-L-isoaspartate alpha-methyl ester + S-adenosyl-L-homocysteine. Catalyzes the methyl esterification of L-isoaspartyl residues in peptides and proteins that result from spontaneous decomposition of normal L-aspartyl and L-asparaginyl residues. It plays a role in the repair and/or degradation of damaged proteins. In Serratia proteamaculans (strain 568), this protein is Protein-L-isoaspartate O-methyltransferase.